Here is a 383-residue protein sequence, read N- to C-terminus: Glycoprotein gp2 (383 aa).

The first 25 residues, 1 to 25 (MGFIYARKLLLCMAVSIYAIGSTTT), serve as a signal peptide directing secretion. Residues 24-75 (TTTETTTSSSSTSGSGQSTSSGTTNSSSSPTTSPPTTSSSPPTSTHTSSPST) show a composition bias toward low complexity. Residues 24-136 (TTTETTTSSS…RNNSIEIVPQ (113 aa)) form a disordered region. The N-linked (GlcNAc...) asparagine; by host glycan is linked to N48. Basic residues predominate over residues 81 to 91 (HAGHHRGRAGG). Residue N128 is glycosylated (N-linked (GlcNAc...) asparagine; by host). The chain crosses the membrane as a helical span at residues 354-371 (LVAATTLTVTILCLLCCL).

It is found in the virion membrane. The glycoprotein gp2 from the avirulent strain Kentucky A (KyA) is probably non functional since this strain harbors an in-frame deletion of 1,242 nucleotides in gene 71. The protein is Glycoprotein gp2 (US4) of Equus caballus (Horse).